We begin with the raw amino-acid sequence, 100 residues long: Integration host factor subunit alpha (100 aa).

The segment at 53–72 (FDLRDKRQRPGRNPKTGEEI) is disordered.

Belongs to the bacterial histone-like protein family. Heterodimer of an alpha and a beta chain.

In terms of biological role, this protein is one of the two subunits of integration host factor, a specific DNA-binding protein that functions in genetic recombination as well as in transcriptional and translational control. The protein is Integration host factor subunit alpha of Pseudomonas entomophila (strain L48).